The sequence spans 389 residues: Probable nitrate transporter NarT (389 aa).

12 helical membrane-spanning segments follow: residues 14-34 (TLSL…MPFI), 45-65 (ISII…PFGY), 69-89 (IVGA…PIFF), 97-117 (GMLM…SVGV), 139-159 (GNIG…IIGW), 161-181 (TTVR…FIFG), 211-231 (WYFI…NYLV), 246-266 (GVFI…GDKF), 268-288 (AVKV…ILGI), 294-314 (LFTV…GLIF), 331-351 (IVSM…TYVA), and 353-373 (LTGS…IALF).

Belongs to the major facilitator superfamily. Nitrate/nitrite porter (TC 2.A.1.8) family.

It localises to the cell membrane. Its function is as follows. Probably required for nitrate uptake under anoxic conditions. Also possibly involved in excretion of nitrite produced by the dissimilatory reduction of nitrate. The polypeptide is Probable nitrate transporter NarT (narT) (Staphylococcus aureus (strain USA300)).